The following is a 177-amino-acid chain: Ribonuclease H (177 aa).

An RNase H type-1 domain is found at 1–142; sequence MSKQVEIFTD…ADELAREGMA (142 aa). The Mg(2+) site is built by Asp10, Glu48, Asp70, and Asp134. The span at 126 to 138 shows a compositional bias: basic and acidic residues; sequence GHTENERADELAR. Residues 126–177 are disordered; the sequence is GHTENERADELAREGMAPFKKGSFKPAASAPKPDAQLKQPVATKARRSTQSY.

It belongs to the RNase H family. As to quaternary structure, monomer. The cofactor is Mg(2+).

It is found in the cytoplasm. The enzyme catalyses Endonucleolytic cleavage to 5'-phosphomonoester.. Endonuclease that specifically degrades the RNA of RNA-DNA hybrids. This is Ribonuclease H from Mesorhizobium japonicum (strain LMG 29417 / CECT 9101 / MAFF 303099) (Mesorhizobium loti (strain MAFF 303099)).